The chain runs to 155 residues: MYRMQLLSCIALTLALVANGAPTSSSTGNTMKEVKSLLLDLQLLLEKVKNLENLKLSRMHTFNFYMPKVNDTELKHLKCLLEELKLLEDVLDLAPSKNRNTREIKDYMASLKGIVLELQGSETRFTCEYDDATVKAVEFQNKWTTFCQSIYSTLT.

The signal sequence occupies residues 1–20 (MYRMQLLSCIALTLALVANG). Thr23 carries O-linked (GalNAc...) threonine glycosylation. The cysteines at positions 79 and 127 are disulfide-linked.

The protein belongs to the IL-2 family.

The protein resides in the secreted. Its function is as follows. Cytokine produced by activated CD4-positive helper T-cells and to a lesser extend activated CD8-positive T-cells and natural killer (NK) cells that plays pivotal roles in the immune response and tolerance. Binds to a receptor complex composed of either the high-affinity trimeric IL-2R (IL2RA/CD25, IL2RB/CD122 and IL2RG/CD132) or the low-affinity dimeric IL-2R (IL2RB and IL2RG). Interaction with the receptor leads to oligomerization and conformation changes in the IL-2R subunits resulting in downstream signaling starting with phosphorylation of JAK1 and JAK3. In turn, JAK1 and JAK3 phosphorylate the receptor to form a docking site leading to the phosphorylation of several substrates including STAT5. This process leads to activation of several pathways including STAT, phosphoinositide-3-kinase/PI3K and mitogen-activated protein kinase/MAPK pathways. Functions as a T-cell growth factor and can increase NK-cell cytolytic activity as well. Promotes strong proliferation of activated B-cells and subsequently immunoglobulin production. Plays a pivotal role in regulating the adaptive immune system by controlling the survival and proliferation of regulatory T-cells, which are required for the maintenance of immune tolerance. Moreover, participates in the differentiation and homeostasis of effector T-cell subsets, including Th1, Th2, Th17 as well as memory CD8-positive T-cells. This chain is Interleukin-2 (IL2), found in Capra hircus (Goat).